The following is a 526-amino-acid chain: GMP synthase [glutamine-hydrolyzing] (526 aa).

A Glutamine amidotransferase type-1 domain is found at arginine 9 to leucine 208. Cysteine 86 functions as the Nucleophile in the catalytic mechanism. Residues histidine 182 and glutamate 184 contribute to the active site. One can recognise a GMPS ATP-PPase domain in the interval tryptophan 209 to arginine 401. Serine 236 to serine 242 provides a ligand contact to ATP.

As to quaternary structure, homodimer.

The catalysed reaction is XMP + L-glutamine + ATP + H2O = GMP + L-glutamate + AMP + diphosphate + 2 H(+). It participates in purine metabolism; GMP biosynthesis; GMP from XMP (L-Gln route): step 1/1. In terms of biological role, catalyzes the synthesis of GMP from XMP. This chain is GMP synthase [glutamine-hydrolyzing], found in Psychromonas ingrahamii (strain DSM 17664 / CCUG 51855 / 37).